The primary structure comprises 208 residues: Small ribosomal subunit protein uS2 (208 aa).

The segment at 189–208 is disordered; the sequence is KPDQDLPVPPEEFETKLVQS.

Belongs to the universal ribosomal protein uS2 family.

This chain is Small ribosomal subunit protein uS2 (rps2), found in Pyrobaculum aerophilum (strain ATCC 51768 / DSM 7523 / JCM 9630 / CIP 104966 / NBRC 100827 / IM2).